A 368-amino-acid chain; its full sequence is Glutamyl-tRNA reductase (368 aa).

Residues 43 to 46 (TCHR), Ser-89, 94 to 96 (EHQ), and Gln-100 each bind substrate. Catalysis depends on Cys-44, which acts as the Nucleophile. Residue 164 to 169 (GTGMMG) coordinates NADP(+).

Belongs to the glutamyl-tRNA reductase family. In terms of assembly, homodimer.

The catalysed reaction is (S)-4-amino-5-oxopentanoate + tRNA(Glu) + NADP(+) = L-glutamyl-tRNA(Glu) + NADPH + H(+). The protein operates within porphyrin-containing compound metabolism; protoporphyrin-IX biosynthesis; 5-aminolevulinate from L-glutamyl-tRNA(Glu): step 1/2. In terms of biological role, catalyzes the NADPH-dependent reduction of glutamyl-tRNA(Glu) to glutamate 1-semialdehyde (GSA). The polypeptide is Glutamyl-tRNA reductase (Thermosipho melanesiensis (strain DSM 12029 / CIP 104789 / BI429)).